The chain runs to 262 residues: Mlc titration factor A (262 aa).

The Zn(2+) site is built by His-111, His-148, His-152, and Glu-211.

It belongs to the MtfA family. Interacts with Mlc. The cofactor is Zn(2+).

The protein localises to the cytoplasm. Its function is as follows. Involved in the modulation of the activity of the glucose-phosphotransferase system (glucose-PTS). Interacts with the transcriptional repressor Mlc, preventing its interaction with DNA and leading to the modulation of expression of genes regulated by Mlc, including ptsG, which encodes the PTS system glucose-specific EIICB component. In terms of biological role, shows zinc-dependent metallopeptidase activity. The polypeptide is Mlc titration factor A (Serratia proteamaculans (strain 568)).